The following is a 367-amino-acid chain: DNA replication and repair protein RecF (367 aa).

An ATP-binding site is contributed by 30-37; sequence GANGSGKT.

This sequence belongs to the RecF family.

The protein localises to the cytoplasm. In terms of biological role, the RecF protein is involved in DNA metabolism; it is required for DNA replication and normal SOS inducibility. RecF binds preferentially to single-stranded, linear DNA. It also seems to bind ATP. The sequence is that of DNA replication and repair protein RecF from Pseudomonas syringae pv. syringae (strain B728a).